The chain runs to 267 residues: Hydroxyethylthiazole kinase (267 aa).

M51 provides a ligand contact to substrate. The ATP site is built by R127 and S173. A200 is a binding site for substrate.

Belongs to the Thz kinase family. The cofactor is Mg(2+).

It catalyses the reaction 5-(2-hydroxyethyl)-4-methylthiazole + ATP = 4-methyl-5-(2-phosphooxyethyl)-thiazole + ADP + H(+). It functions in the pathway cofactor biosynthesis; thiamine diphosphate biosynthesis; 4-methyl-5-(2-phosphoethyl)-thiazole from 5-(2-hydroxyethyl)-4-methylthiazole: step 1/1. Its function is as follows. Catalyzes the phosphorylation of the hydroxyl group of 4-methyl-5-beta-hydroxyethylthiazole (THZ). This is Hydroxyethylthiazole kinase from Psychromonas ingrahamii (strain DSM 17664 / CCUG 51855 / 37).